Here is a 632-residue protein sequence, read N- to C-terminus: MAU2 chromatid cohesion factor homolog (632 aa).

2 TPR repeats span residues 453–486 (GGFY…ANAE) and 493–526 (SCSL…ASKI).

Belongs to the SCC4/mau-2 family. Interacts with Nipped-B to form the cohesin loading complex.

The protein resides in the nucleus. It is found in the nucleoplasm. Its function is as follows. Required for association of the cohesin complex with chromatin during interphase. Plays a role in sister chromatid cohesion and normal progression through prometaphase. The protein is MAU2 chromatid cohesion factor homolog of Drosophila melanogaster (Fruit fly).